The chain runs to 422 residues: UPF0597 protein Kole_0595 (422 aa).

The protein belongs to the UPF0597 family.

The sequence is that of UPF0597 protein Kole_0595 from Kosmotoga olearia (strain ATCC BAA-1733 / DSM 21960 / TBF 19.5.1).